The primary structure comprises 100 residues: Urease subunit gamma (100 aa).

Belongs to the urease gamma subunit family. In terms of assembly, heterotrimer of UreA (gamma), UreB (beta) and UreC (alpha) subunits. Three heterotrimers associate to form the active enzyme.

It localises to the cytoplasm. It carries out the reaction urea + 2 H2O + H(+) = hydrogencarbonate + 2 NH4(+). Its pathway is nitrogen metabolism; urea degradation; CO(2) and NH(3) from urea (urease route): step 1/1. This chain is Urease subunit gamma, found in Laribacter hongkongensis (strain HLHK9).